A 900-amino-acid polypeptide reads, in one-letter code: Phosphoenolpyruvate carboxylase (900 aa).

Active-site residues include H140 and K568.

Belongs to the PEPCase type 1 family. Requires Mg(2+) as cofactor.

The catalysed reaction is oxaloacetate + phosphate = phosphoenolpyruvate + hydrogencarbonate. Functionally, forms oxaloacetate, a four-carbon dicarboxylic acid source for the tricarboxylic acid cycle. The chain is Phosphoenolpyruvate carboxylase from Neisseria meningitidis serogroup A / serotype 4A (strain DSM 15465 / Z2491).